Consider the following 83-residue polypeptide: Carboxysome shell vertex protein CsoS4A (83 aa).

A BMV domain is found at 1–78 (MKIMQVEKTL…SDLTIIGIID (78 aa)).

Belongs to the CcmL/EutN family. CsoS4 subfamily. As to quaternary structure, homopentamer.

The protein resides in the carboxysome. Functionally, probably forms vertices in the carboxysome, a polyhedral inclusion where RuBisCO (ribulose bisphosphate carboxylase, cbbL-cbbS) is sequestered. Has been modeled to induce curvature upon insertion into an otherwise flat hexagonal layer of major carboxysome subunits. A minor shell protein, only 12 pentamers of CsoS4A/CsoS4B are calculated to be present in each carboxysome. The 2 CsoS4 proteins contribute to the impermeability of the carboxysome to CO(2). Its function is as follows. Unlike beta-carboxysomes, alpha-carboxysomes (Cb) can form without cargo protein. CsoS2 is essential for Cb formation and is also capable of targeting foreign proteins to the Cb. The Cb shell assembles with the aid of CsoS2; CsoS1A, CsoS1B and CsoS1C form the majority of the shell while CsoS4A and CsoS4B form vertices. CsoS1D forms pseudohexamers that probably control metabolite flux into and out of the shell. In Halothiobacillus neapolitanus (strain ATCC 23641 / c2) (Thiobacillus neapolitanus), this protein is Carboxysome shell vertex protein CsoS4A.